The sequence spans 298 residues: Tyrosine recombinase XerC (298 aa).

One can recognise a Core-binding (CB) domain in the interval Thr-2 to Val-88. Residues His-109 to Asp-288 enclose the Tyr recombinase domain. Active-site residues include Arg-148, Lys-172, His-240, Arg-243, and His-266. Tyr-275 acts as the O-(3'-phospho-DNA)-tyrosine intermediate in catalysis.

It belongs to the 'phage' integrase family. XerC subfamily. Forms a cyclic heterotetrameric complex composed of two molecules of XerC and two molecules of XerD, in which XerC interacts with XerD via its C-terminal region, XerD interacts with XerC via its C-terminal region and so on.

The protein localises to the cytoplasm. FtsK may regulate the catalytic switch between XerC and XerD in the heterotetrameric complex during the two steps of the recombination process. Site-specific tyrosine recombinase, which acts by catalyzing the cutting and rejoining of the recombining DNA molecules. Binds cooperatively to specific DNA consensus sequences that are separated from XerD binding sites by a short central region, forming the heterotetrameric XerC-XerD complex that recombines DNA substrates. The complex is essential to convert dimers of the bacterial chromosome into monomers to permit their segregation at cell division. It also contributes to the segregational stability of plasmids. In the complex XerC specifically exchanges the top DNA strands. In Shigella dysenteriae serotype 1 (strain Sd197), this protein is Tyrosine recombinase XerC.